A 215-amino-acid chain; its full sequence is Polysialic acid O-acetyltransferase (215 aa).

Acetyl-CoA-binding positions include 119–121 (DMH), arginine 148, lysine 154, serine 166, 171–172 (YK), and lysine 190.

This sequence belongs to the transferase hexapeptide repeat family. Homotrimer.

It catalyses the reaction [(2-&gt;6)-alpha-D-glucosyl-(1-&gt;4)-N-acetyl-alpha-D-neuraminosyl](n) + n acetyl-CoA = [(2-&gt;6)-alpha-D-glucosyl-(1-&gt;4)-N,7-O-diacetyl-alpha-D-neuraminosyl](n) + n CoA. The catalysed reaction is [(2-&gt;6)-alpha-D-glucosyl-(1-&gt;4)-N-acetyl-alpha-D-neuraminosyl](n) + n acetyl-CoA = [(2-&gt;6)-alpha-D-glucosyl-(1-&gt;4)-N,O(9)-diacetyl-alpha-D-neuraminosyl](n) + n CoA. Functionally, catalyzes the O-acetylation of capsular polymeric sialic acid consisting of polymers of (2-&gt;6)-alpha-D-glucosyl-(1-&gt;4)-N-acetyl-alpha-D-neuraminosyl residues. Shows high substrate specificity toward polymers of sialic acid that contains a large number of residues. The polypeptide is Polysialic acid O-acetyltransferase (Neisseria meningitidis).